We begin with the raw amino-acid sequence, 378 residues long: Erythronate-4-phosphate dehydrogenase (378 aa).

Substrate is bound by residues serine 45 and threonine 66. Aspartate 146 serves as a coordination point for NAD(+). Arginine 207 is a catalytic residue. NAD(+) is bound at residue aspartate 231. Residue glutamate 236 is part of the active site. The active-site Proton donor is histidine 253. Position 256 (glycine 256) interacts with NAD(+).

The protein belongs to the D-isomer specific 2-hydroxyacid dehydrogenase family. PdxB subfamily. As to quaternary structure, homodimer.

Its subcellular location is the cytoplasm. The catalysed reaction is 4-phospho-D-erythronate + NAD(+) = (R)-3-hydroxy-2-oxo-4-phosphooxybutanoate + NADH + H(+). It participates in cofactor biosynthesis; pyridoxine 5'-phosphate biosynthesis; pyridoxine 5'-phosphate from D-erythrose 4-phosphate: step 2/5. Its function is as follows. Catalyzes the oxidation of erythronate-4-phosphate to 3-hydroxy-2-oxo-4-phosphonooxybutanoate. The polypeptide is Erythronate-4-phosphate dehydrogenase (Wigglesworthia glossinidia brevipalpis).